The sequence spans 685 residues: Linoleate 9/13-lipoxygenase (685 aa).

The signal sequence occupies residues 1-19 (MKRRSVLLSGVALSGTALA). Positions 122–685 (ASLPASAAAQ…PSRIPASTNI (564 aa)) constitute a Lipoxygenase domain. Residues histidine 377, histidine 382, histidine 555, asparagine 559, and isoleucine 685 each coordinate Fe cation.

The protein belongs to the lipoxygenase family. As to quaternary structure, monomer. The cofactor is Fe cation.

It localises to the periplasm. It carries out the reaction (9Z,12Z)-octadecadienoate + O2 = (9S)-hydroperoxy-(10E,12Z)-octadecadienoate. The enzyme catalyses (9Z)-octadecenoate + O2 = (8E,10S)-10-hydroperoxy-octadeca-8-enoate. The catalysed reaction is (9Z,12Z)-octadecadienoate + O2 = (8E,10S,12Z)-10-hydroperoxyoctadeca-8,12-dienoate. It catalyses the reaction (9Z,12Z,15Z)-octadecatrienoate + O2 = (8E,10S,12Z,15Z)-10-hydroperoxyoctadeca-8,12,15-trienoate. It carries out the reaction (9Z,12Z)-octadecadienoate + O2 = (13S)-hydroperoxy-(9Z,11E)-octadecadienoate. The enzyme catalyses (9Z,12Z,15Z)-octadecatrienoate + O2 = (13S)-hydroperoxy-(9Z,11E,15Z)-octadecatrienoate. Its activity is regulated as follows. Inhibited by Ba(2+), Zn(2+) and Fe(3+). Its function is as follows. In presence of oxygen, converts linoleate into (9S)-hydroperoxy-10,12-octadecenoate (9HPOD), which spontaneously decomposes to the corresponding 9-hydroxy-10,12-octadecenoate (9HOD), and into 13-hydroperoxy-9,11-octadecenoate (13HPOD) which spontaneously decomposes to the corresponding 13-hydroxy-9,11-octadecenoate (13HOD). Also active on linolenate. To a lesser extent, is also able to convert oleate into (10S)-hydroperoxy-8E-octadecenoate, which spontaneously decomposes to the corresponding 10-hydroxy-8E-octadecenoate. Is almost not active on arachidonate. In Pseudomonas aeruginosa, this protein is Linoleate 9/13-lipoxygenase (lox).